We begin with the raw amino-acid sequence, 558 residues long: Hsp70-Hsp90 organizing protein 3 (558 aa).

TPR repeat units follow at residues 2 to 35 (AEEA…SPTN), 37 to 69 (ILYS…KPDW), 70 to 103 (SKGY…DPSN), and 136 to 173 (EKLT…YMKD). The STI1 1 domain maps to 131 to 170 (GKEMWEKLTADPGTRVYLEQDDFVKTMKEIQRNPNNLNLY). Residues 191–232 (SSGEDTEMKEADERKEPEPEMEPMELTEEERQKKERKEKALK) form a disordered region. Basic and acidic residues predominate over residues 196-208 (TEMKEADERKEPE). Residues 209 to 218 (PEMEPMELTE) show a composition bias toward acidic residues. A compositionally biased stretch (basic and acidic residues) spans 219–232 (EERQKKERKEKALK). Positions 227–244 (KEKALKEKGEGNVAYKKK) match the Bipartite nuclear localization signal motif. TPR repeat units lie at residues 230 to 263 (ALKE…DDED), 265 to 297 (SYLT…GREL), 305 to 342 (ARAL…HRNP), 369 to 402 (AEEE…NPND), 404 to 436 (RAYS…DPSF), and 437 to 470 (TKGY…DPKN). Residues 507 to 546 (DPEVQNILSDPVMRQVLVDFQENPKAAQEHMKNPMVMNKI) enclose the STI1 2 domain.

Co-chaperone that forms a complex with HSP70 and HSP90 and preproteins (e.g. chloroplast preproteins). Phosphorylated. In terms of processing, acetylated.

The protein resides in the cytoplasm. Its subcellular location is the nucleus. Functionally, mediates the association of the molecular chaperones HSP70 and HSP90. Mediates nuclear encoded chloroplast preproteins binding to HSP90 prior to chloroplastic sorting. Involved in acclimation to heat. In Arabidopsis thaliana (Mouse-ear cress), this protein is Hsp70-Hsp90 organizing protein 3 (HOP3).